We begin with the raw amino-acid sequence, 288 residues long: RanBP2-type zinc finger protein At1g67325 (288 aa).

Over residues methionine 1–alanine 11 the composition is skewed to polar residues. Disordered regions lie at residues methionine 1–aspartate 24, proline 52–leucine 77, methionine 176–tryptophan 198, proline 222–aspartate 248, and asparagine 265–glutamine 288. Positions alanine 15–aspartate 24 are enriched in basic and acidic residues. 3 RanBP2-type zinc fingers span residues arginine 22–alanine 53, arginine 194–glycine 225, and proline 241–glycine 272. Positions phenylalanine 181–aspartate 197 are enriched in basic and acidic residues. The segment covering lysine 223–proline 241 has biased composition (polar residues). Phosphoserine is present on serine 278.

This is RanBP2-type zinc finger protein At1g67325 from Arabidopsis thaliana (Mouse-ear cress).